Consider the following 128-residue polypeptide: Ribosome-binding factor A (128 aa).

Belongs to the RbfA family. As to quaternary structure, monomer. Binds 30S ribosomal subunits, but not 50S ribosomal subunits or 70S ribosomes.

It is found in the cytoplasm. In terms of biological role, one of several proteins that assist in the late maturation steps of the functional core of the 30S ribosomal subunit. Associates with free 30S ribosomal subunits (but not with 30S subunits that are part of 70S ribosomes or polysomes). Required for efficient processing of 16S rRNA. May interact with the 5'-terminal helix region of 16S rRNA. This Haemophilus influenzae (strain ATCC 51907 / DSM 11121 / KW20 / Rd) protein is Ribosome-binding factor A.